We begin with the raw amino-acid sequence, 172 residues long: Ribosome maturation factor RimM (172 aa).

One can recognise a PRC barrel domain in the interval 96–170 (EENEFYFHEI…KITIEVMEGL (75 aa)).

Belongs to the RimM family. Binds ribosomal protein uS19.

It localises to the cytoplasm. Functionally, an accessory protein needed during the final step in the assembly of 30S ribosomal subunit, possibly for assembly of the head region. Essential for efficient processing of 16S rRNA. May be needed both before and after RbfA during the maturation of 16S rRNA. It has affinity for free ribosomal 30S subunits but not for 70S ribosomes. The chain is Ribosome maturation factor RimM from Listeria monocytogenes serotype 4b (strain CLIP80459).